Reading from the N-terminus, the 90-residue chain is Large ribosomal subunit protein bL27 (90 aa).

Belongs to the bacterial ribosomal protein bL27 family.

The chain is Large ribosomal subunit protein bL27 from Rhodopseudomonas palustris (strain BisB5).